Consider the following 116-residue polypeptide: Holo-[acyl-carrier-protein] synthase (116 aa).

Mg(2+)-binding residues include aspartate 5 and glutamate 50.

Belongs to the P-Pant transferase superfamily. AcpS family. Requires Mg(2+) as cofactor.

The protein resides in the cytoplasm. It carries out the reaction apo-[ACP] + CoA = holo-[ACP] + adenosine 3',5'-bisphosphate + H(+). In terms of biological role, transfers the 4'-phosphopantetheine moiety from coenzyme A to a Ser of acyl-carrier-protein. The chain is Holo-[acyl-carrier-protein] synthase from Campylobacter lari (strain RM2100 / D67 / ATCC BAA-1060).